The sequence spans 955 residues: Iron-responsive element-binding protein 2 (955 aa).

Residues cysteine 504, cysteine 570, and cysteine 573 each contribute to the [4Fe-4S] cluster site.

It belongs to the aconitase/IPM isomerase family. The cofactor is [4Fe-4S] cluster. Ubiquitinated and degraded by the proteasome in presence of high level of iron and oxygen.

Its subcellular location is the cytoplasm. Functionally, RNA-binding protein that binds to iron-responsive elements (IRES), which are stem-loop structures found in the 5'-UTR of ferritin, and delta aminolevulinic acid synthase mRNAs, and in the 3'-UTR of transferrin receptor mRNA. Binding to the IRE element in ferritin results in the repression of its mRNA translation. Binding of the protein to the transferrin receptor mRNA inhibits the degradation of this otherwise rapidly degraded mRNA. In Xenopus laevis (African clawed frog), this protein is Iron-responsive element-binding protein 2 (ireb2).